A 272-amino-acid chain; its full sequence is Shikimate dehydrogenase (NADP(+)) (272 aa).

Shikimate is bound by residues 14 to 16 (SKS) and Thr61. Residue Lys65 is the Proton acceptor of the active site. Glu77 contributes to the NADP(+) binding site. Shikimate-binding residues include Asn86 and Asp102. NADP(+) contacts are provided by residues 126–130 (GAGGA), 149–154 (NRTYSR), and Met213. Position 215 (Tyr215) interacts with shikimate. An NADP(+)-binding site is contributed by Gly237.

It belongs to the shikimate dehydrogenase family. In terms of assembly, homodimer.

The catalysed reaction is shikimate + NADP(+) = 3-dehydroshikimate + NADPH + H(+). Its pathway is metabolic intermediate biosynthesis; chorismate biosynthesis; chorismate from D-erythrose 4-phosphate and phosphoenolpyruvate: step 4/7. Involved in the biosynthesis of the chorismate, which leads to the biosynthesis of aromatic amino acids. Catalyzes the reversible NADPH linked reduction of 3-dehydroshikimate (DHSA) to yield shikimate (SA). In Enterobacter sp. (strain 638), this protein is Shikimate dehydrogenase (NADP(+)).